The sequence spans 327 residues: Eukaryotic translation initiation factor 3 subunit I (327 aa).

WD repeat units follow at residues 8 to 49 (GHER…GSYD), 51 to 89 (HNGA…CIYT), 188 to 227 (VHRY…KLKQ), 229 to 268 (KSER…GHFE), and 285 to 324 (GHFG…LGFT).

It belongs to the eIF-3 subunit I family. In terms of assembly, component of the eukaryotic translation initiation factor 3 (eIF-3) complex.

The protein resides in the cytoplasm. Functionally, component of the eukaryotic translation initiation factor 3 (eIF-3) complex, which is involved in protein synthesis of a specialized repertoire of mRNAs and, together with other initiation factors, stimulates binding of mRNA and methionyl-tRNAi to the 40S ribosome. The eIF-3 complex specifically targets and initiates translation of a subset of mRNAs involved in cell proliferation. This chain is Eukaryotic translation initiation factor 3 subunit I, found in Caenorhabditis briggsae.